The following is a 539-amino-acid chain: Glucose-6-phosphate isomerase (539 aa).

Glu-353 acts as the Proton donor in catalysis. Active-site residues include His-384 and Lys-505.

This sequence belongs to the GPI family.

The protein localises to the cytoplasm. The enzyme catalyses alpha-D-glucose 6-phosphate = beta-D-fructose 6-phosphate. It participates in carbohydrate biosynthesis; gluconeogenesis. It functions in the pathway carbohydrate degradation; glycolysis; D-glyceraldehyde 3-phosphate and glycerone phosphate from D-glucose: step 2/4. Its function is as follows. Catalyzes the reversible isomerization of glucose-6-phosphate to fructose-6-phosphate. The sequence is that of Glucose-6-phosphate isomerase from Ralstonia nicotianae (strain ATCC BAA-1114 / GMI1000) (Ralstonia solanacearum).